The sequence spans 400 residues: Endoglucanase 5A (400 aa).

Residues 1 to 26 (MKKITTIFVVLLMTVALFSIGNTTAA) form the signal peptide. Substrate-binding positions include H61, 65-66 (WY), Y92, and H127. The active-site Proton donor is the E165. Substrate is bound at residue Y228. E254 acts as the Nucleophile in catalysis. Substrate is bound by residues 260–261 (AT), W288, and 293–295 (KDE). The segment at 328–363 (ESASIPPSDPTPPSDPGEPDPTPPSDPGEYPAWDPN) is disordered. Residues 334–353 (PSDPTPPSDPGEPDPTPPSD) show a composition bias toward pro residues. The 40-residue stretch at 357–396 (YPAWDPNQIYTNEIVYHNGQLWQAKWWTQNQEPGDPYGPW) folds into the Chitin-binding type-3 domain.

It belongs to the glycosyl hydrolase 5 (cellulase A) family. As to quaternary structure, monomer.

It is found in the secreted. The catalysed reaction is Endohydrolysis of (1-&gt;4)-beta-D-glucosidic linkages in cellulose, lichenin and cereal beta-D-glucans.. This Salipaludibacillus agaradhaerens (Bacillus agaradhaerens) protein is Endoglucanase 5A (cel5A).